The sequence spans 509 residues: MDIRAAEISAILKEQIKNFGQEAEVTEVGQVLSVGDGIARVYGLDKVQAGEMVEFESGVRGMALNLEQDNVGVVIFGVDRDIKEGQTVKRTGAIVDVPVGKGLLGRVVDALGNPIDGKGPIVASERRRVDVKAPGIIPRKSVHEPMATGLKSVDALIPIGRGQRELIIGDRQTGKTAIALDTILNQKPAHEGSDEKAKLYCVYVAVGQKRSTVAQFVKVLEDNGALEYSIVIAATASDPAPMQFLAPFSGCAMGEFFRDNGMHAVIIYDDLSKQAVAYRQMSLLLRRPPGREAYPGDVFYLHSRLLERAAKMGDAAGAGSLTALPVIETQANDVSAYIPTNVISITDGQIFLETDLFYQGVRPAVNVGLSVSRVGSAAQTKAMKKVAGKIKGELAQYREMAAFAQFGSDLDAATQRLLNRGSRLTELLKQPQFSPLKMEEQVAVIYAGVNGYLDPIPVNRVRAFEDGLLATLRGKHADLLEAIRASKDLSDESAAKLKGVVEAFAKSFG.

Gly-169 to Thr-176 provides a ligand contact to ATP.

It belongs to the ATPase alpha/beta chains family. F-type ATPases have 2 components, CF(1) - the catalytic core - and CF(0) - the membrane proton channel. CF(1) has five subunits: alpha(3), beta(3), gamma(1), delta(1), epsilon(1). CF(0) has three main subunits: a(1), b(2) and c(9-12). The alpha and beta chains form an alternating ring which encloses part of the gamma chain. CF(1) is attached to CF(0) by a central stalk formed by the gamma and epsilon chains, while a peripheral stalk is formed by the delta and b chains.

It is found in the cell inner membrane. The catalysed reaction is ATP + H2O + 4 H(+)(in) = ADP + phosphate + 5 H(+)(out). Its function is as follows. Produces ATP from ADP in the presence of a proton gradient across the membrane. The alpha chain is a regulatory subunit. This Methylobacterium nodulans (strain LMG 21967 / CNCM I-2342 / ORS 2060) protein is ATP synthase subunit alpha.